We begin with the raw amino-acid sequence, 370 residues long: Ferrochelatase (370 aa).

2 residues coordinate Fe cation: H210 and E291.

It belongs to the ferrochelatase family.

Its subcellular location is the cytoplasm. The enzyme catalyses heme b + 2 H(+) = protoporphyrin IX + Fe(2+). It functions in the pathway porphyrin-containing compound metabolism; protoheme biosynthesis; protoheme from protoporphyrin-IX: step 1/1. Its function is as follows. Catalyzes the ferrous insertion into protoporphyrin IX. In Marinobacter nauticus (strain ATCC 700491 / DSM 11845 / VT8) (Marinobacter aquaeolei), this protein is Ferrochelatase.